The primary structure comprises 863 residues: Glycogen phosphorylase (863 aa).

Lysine 618 carries the N6-(pyridoxal phosphate)lysine modification.

This sequence belongs to the glycogen phosphorylase family. Requires pyridoxal 5'-phosphate as cofactor.

It carries out the reaction [(1-&gt;4)-alpha-D-glucosyl](n) + phosphate = [(1-&gt;4)-alpha-D-glucosyl](n-1) + alpha-D-glucose 1-phosphate. Its function is as follows. Phosphorylase is an important allosteric enzyme in carbohydrate metabolism. Enzymes from different sources differ in their regulatory mechanisms and in their natural substrates. However, all known phosphorylases share catalytic and structural properties. The protein is Glycogen phosphorylase (glgP) of Mycobacterium tuberculosis (strain CDC 1551 / Oshkosh).